A 1888-amino-acid polypeptide reads, in one-letter code: Zinc finger protein 106 (1888 aa).

The C2H2-type 1; atypical zinc-finger motif lies at 5–29 (RKCILCHIVYGSKKEMDEHMRSMLH). A C2H2-type 2; atypical zinc finger spans residues 43 to 67 (HECRVCRVTEVGLSAYAKHISGQLH). Residues 68-187 (KDNVDAQERE…GPRGSSVWHK (120 aa)) are disordered. Residues 75 to 89 (EREDDGKEEEEEEYF) are compositionally biased toward acidic residues. Basic and acidic residues-rich tracts occupy residues 90 to 108 (DKEL…RQDE), 118 to 138 (SDDR…DRES), and 150 to 160 (PQRDWKWEKDG). K91 participates in a covalent cross-link: Glycyl lysine isopeptide (Lys-Gly) (interchain with G-Cter in SUMO2). K155 participates in a covalent cross-link: Glycyl lysine isopeptide (Lys-Gly) (interchain with G-Cter in SUMO2). The span at 161-175 (FNSTRKNSFPHSLRN) shows a compositional bias: polar residues. Glycyl lysine isopeptide (Lys-Gly) (interchain with G-Cter in SUMO2) cross-links involve residues K265 and K309. 2 disordered regions span residues 287–326 (KKSN…DTFP) and 338–362 (RESQ…TKAR). Over residues 296 to 311 (SQERCKWQRQDRDKAA) the composition is skewed to basic and acidic residues. The segment covering 342 to 357 (TTKQTDTAASKINGKN) has biased composition (polar residues). Glycyl lysine isopeptide (Lys-Gly) (interchain with G-Cter in SUMO2) cross-links involve residues K375, K384, K390, K435, K469, and K479. 2 disordered regions span residues 410 to 437 (KPVD…HKAI) and 453 to 525 (TEQS…TSKS). Over residues 481 to 491 (GPHKQNLKNRS) the composition is skewed to basic residues. The span at 507 to 525 (LLNTSTLEGSHGSSYTSKS) shows a compositional bias: polar residues. Residues K524, K534, and K544 each participate in a glycyl lysine isopeptide (Lys-Gly) (interchain with G-Cter in SUMO2) cross-link. Residues 537–617 (KTVSGTQKEP…SAMTSDAENH (81 aa)) form a disordered region. Polar residues predominate over residues 551–572 (NNTSQKAQDTVLQCPKTLQNPL). A Glycyl lysine isopeptide (Lys-Gly) (interchain with G-Cter in SUMO2) cross-link involves residue K577. Residues 577–593 (KRMENDAKESSVEESAK) show a composition bias toward basic and acidic residues. Positions 597–613 (SIESQPHSAGNSAMTSD) are enriched in polar residues. K620 is covalently cross-linked (Glycyl lysine isopeptide (Lys-Gly) (interchain with G-Cter in SUMO2)). Positions 635 to 661 (STHTVDKEQGSQIPGTPENLSTSPRNS) are disordered. Residues 644 to 661 (GSQIPGTPENLSTSPRNS) show a composition bias toward polar residues. 2 positions are modified to phosphoserine: S657 and S677. Residues K687, K700, K721, K738, K758, K792, and K824 each participate in a glycyl lysine isopeptide (Lys-Gly) (interchain with G-Cter in SUMO2) cross-link. The segment at 696-728 (NNLVKSDGPFETESFEDTSLDTELQKPDLNNQP) is disordered. Phosphoserine is present on residues S876, S878, S881, and S909. The tract at residues 894-920 (TGEGTGKENEAQQSPSPNTALSAAQSQ) is disordered. Residues 904 to 920 (AQQSPSPNTALSAAQSQ) show a composition bias toward polar residues. A Glycyl lysine isopeptide (Lys-Gly) (interchain with G-Cter in SUMO2) cross-link involves residue K921. S953 bears the Phosphoserine mark. Basic and acidic residues predominate over residues 968–986 (ARDLHSQERSTPLSERHAQ). Disordered regions lie at residues 968 to 1064 (ARDL…ERSQ), 1281 to 1461 (EQGN…SKKD), and 1468 to 1487 (QNPI…TSEL). A compositionally biased stretch (low complexity) spans 992–1008 (GNSLSSNASSGHAVSSL). A compositionally biased stretch (polar residues) spans 1013–1022 (TDSSCTSGAE). The residue at position 1036 (T1036) is a Phosphothreonine. 3 positions are modified to phosphoserine: S1040, S1041, and S1046. Positions 1050–1060 (KNKRRKIKGKK) are enriched in basic residues. The segment covering 1281 to 1296 (EQGNSRSKGNSPSCQS) has biased composition (polar residues). Phosphoserine occurs at positions 1291, 1293, and 1296. K1310 is covalently cross-linked (Glycyl lysine isopeptide (Lys-Gly) (interchain with G-Cter in SUMO2)). Residues 1312–1321 (SSGSEACSSS) show a composition bias toward low complexity. S1313 carries the post-translational modification Phosphoserine. K1335 is covalently cross-linked (Glycyl lysine isopeptide (Lys-Gly) (interchain with G-Cter in SUMO2)). The span at 1338-1354 (QSPADQPEQQAESTLAS) shows a compositional bias: polar residues. Phosphoserine is present on S1339. The segment covering 1360 to 1373 (SKKKKKLRKKKTLR) has biased composition (basic residues). S1381 is modified (phosphoserine). Position 1383 is a phosphothreonine (T1383). Glycyl lysine isopeptide (Lys-Gly) (interchain with G-Cter in SUMO2) cross-links involve residues K1391, K1403, K1406, and K1460. The segment covering 1450–1461 (GDEKPDSPSKKD) has biased composition (basic and acidic residues). The segment covering 1470–1487 (PIETSRSGCDEVSSTSEL) has biased composition (polar residues). S1474 bears the Phosphoserine mark. Glycyl lysine isopeptide (Lys-Gly) (interchain with G-Cter in SUMO2) cross-links involve residues K1492 and K1509. The interval 1509 to 1531 (KASKHSSEISSEPGDDEEPTEGS) is disordered. WD repeat units follow at residues 1534 to 1573 (GHQA…GVFE), 1575 to 1618 (HTSK…EQLQ), 1659 to 1700 (HGPR…LLRT), 1703 to 1742 (GHSK…RIYK), 1743 to 1780 (GHNH…RLQV), and 1783 to 1820 (GHKD…NYRC). K1590 participates in a covalent cross-link: Glycyl lysine isopeptide (Lys-Gly) (interchain with G-Cter in SUMO2). Residue K1742 forms a Glycyl lysine isopeptide (Lys-Gly) (interchain with G-Cter in SUMO2) linkage. The C2H2-type 3; atypical zinc finger occupies 1818 to 1843 (YRCWWYGCTLIFGVVDHLKQHLLTDH). K1869 participates in a covalent cross-link: Glycyl lysine isopeptide (Lys-Gly) (interchain with G-Cter in SUMO2).

Interacts with KNOP1. Interacts with TARDBP and NUP107. Interacts (via N-terminus) with RBM39. Interacts with the SH3 domains of FYN and GRB2. Phosphorylated by FYN in vitro. Widely expressed, with strongest expression in skeletal muscle, heart and brain (at protein level). Detected in spinal cord motor neurons.

It is found in the nucleus. The protein resides in the nucleolus. It localises to the nucleus speckle. Functionally, RNA-binding protein. Specifically binds to 5'-GGGGCC-3' sequence repeats in RNA. Essential for maintenance of peripheral motor neuron and skeletal muscle function. Required for normal expression and/or alternative splicing of a number of genes in spinal cord and skeletal muscle, including the neurite outgrowth inhibitor RTN4. Also contributes to normal mitochondrial respiratory function in motor neurons, via an unknown mechanism. The chain is Zinc finger protein 106 (Znf106) from Mus musculus (Mouse).